The primary structure comprises 468 residues: ATP synthase subunit beta (468 aa).

155 to 162 is a binding site for ATP; it reads GGAGVGKT.

Belongs to the ATPase alpha/beta chains family. F-type ATPases have 2 components, CF(1) - the catalytic core - and CF(0) - the membrane proton channel. CF(1) has five subunits: alpha(3), beta(3), gamma(1), delta(1), epsilon(1). CF(0) has three main subunits: a(1), b(2) and c(9-12). The alpha and beta chains form an alternating ring which encloses part of the gamma chain. CF(1) is attached to CF(0) by a central stalk formed by the gamma and epsilon chains, while a peripheral stalk is formed by the delta and b chains.

Its subcellular location is the cell inner membrane. It carries out the reaction ATP + H2O + 4 H(+)(in) = ADP + phosphate + 5 H(+)(out). Produces ATP from ADP in the presence of a proton gradient across the membrane. The catalytic sites are hosted primarily by the beta subunits. This is ATP synthase subunit beta from Thermotoga neapolitana (strain ATCC 49049 / DSM 4359 / NBRC 107923 / NS-E).